The following is a 110-amino-acid chain: Phosphoribosyl-AMP cyclohydrolase (110 aa).

Residue D80 coordinates Mg(2+). C81 lines the Zn(2+) pocket. Mg(2+) contacts are provided by D82 and D84. Residues C97 and C104 each coordinate Zn(2+).

The protein belongs to the PRA-CH family. As to quaternary structure, homodimer. Requires Mg(2+) as cofactor. The cofactor is Zn(2+).

The protein localises to the cytoplasm. The catalysed reaction is 1-(5-phospho-beta-D-ribosyl)-5'-AMP + H2O = 1-(5-phospho-beta-D-ribosyl)-5-[(5-phospho-beta-D-ribosylamino)methylideneamino]imidazole-4-carboxamide. Its pathway is amino-acid biosynthesis; L-histidine biosynthesis; L-histidine from 5-phospho-alpha-D-ribose 1-diphosphate: step 3/9. In terms of biological role, catalyzes the hydrolysis of the adenine ring of phosphoribosyl-AMP. This chain is Phosphoribosyl-AMP cyclohydrolase, found in Clostridium botulinum (strain Okra / Type B1).